The primary structure comprises 827 residues: N-terminal kinase-like protein (827 aa).

One can recognise a Protein kinase domain in the interval 1–309; that stretch reads MWFWSRDPAR…PEDFCRHKIL (309 aa). HEAT repeat units lie at residues 345-383, 384-422, and 502-540; these read IIPV…VNAQ, IFPH…LNME, and VLPV…EDPS. Residues 586-624 are compositionally biased toward low complexity; it reads DAAASEGASAPSTASEASKPDTAPSSSAPPAAASTAPTS. The disordered stretch occupies residues 586 to 827; the sequence is DAAASEGASA…PLKLGVRKLD (242 aa). Residues 630–640 show a composition bias toward basic and acidic residues; sequence EKGAPDNSLDR. Residues 641–652 are compositionally biased toward acidic residues; it reads WDDEDWGSLEDA. Over residues 667–678 the composition is skewed to basic and acidic residues; the sequence is DWGHGKTQEKTV. 2 stretches are compositionally biased toward polar residues: residues 679 to 690 and 737 to 746; these read DFSSSRSKTKQV and NWDTSGSSGR. The span at 774 to 783 shows a compositional bias: acidic residues; it reads GGDDNWESVE. A coiled-coil region spans residues 788-817; it reads LSKAEMARKKREERQKEIEAKRAERRAAKG. Positions 792-814 are enriched in basic and acidic residues; sequence EMARKKREERQKEIEAKRAERRA.

It belongs to the protein kinase superfamily.

In terms of biological role, regulates COPI-mediated retrograde protein traffic at the interface between the Golgi apparatus and the endoplasmic reticulum. Involved in the maintenance of the Golgi apparatus morphology. In Xenopus tropicalis (Western clawed frog), this protein is N-terminal kinase-like protein (scyl1).